Consider the following 487-residue polypeptide: 1,4-beta-D-glucan cellobiohydrolase CEL6A (487 aa).

A signal peptide spans 1–17 (MASKLFLAAALLQGALS). The CBM1 domain maps to 27 to 63 (ACAAQWGQCGGQDYTGPTCCQSGSTCVVSNQWYSQCL). Cystine bridges form between Cys35/Cys52 and Cys46/Cys62. Residues 64–117 (PGSSNPTTTSRTSTSSSSSTSRTSSSTSRPPSSVPTTPTSVPPTITTTPTTTPT) show a composition bias toward low complexity. Residues 64 to 127 (PGSSNPTTTS…GGSGPGTTAS (64 aa)) are disordered. The substrate site is built by Trp175 and Asp177. Residue Asp216 is part of the active site. Asp262 (proton donor) is an active-site residue. Substrate contacts are provided by His307, Trp310, Asn346, Trp407, Lys435, and Glu439. Asp441 acts as the Proton acceptor in catalysis.

Belongs to the glycosyl hydrolase 6 (cellulase B) family.

It is found in the secreted. It catalyses the reaction Hydrolysis of (1-&gt;4)-beta-D-glucosidic linkages in cellulose and cellotetraose, releasing cellobiose from the non-reducing ends of the chains.. Functionally, exoglucanase that plays an important function in biomass degradation by catalyzing the hydrolysis of the non-reducing end beta-1,4-glucosidic linkages in cellulose and cellotetraose to release cellobiose. Shows higher hydrolytic activities on phosphoric acid-swollen cellulose (PSC), beta-glucan, and cellooligosaccharide derivatives than on cellulose, of which the best substrates were cellooligosaccharides. The sequence is that of 1,4-beta-D-glucan cellobiohydrolase CEL6A from Pyricularia oryzae (strain 70-15 / ATCC MYA-4617 / FGSC 8958) (Rice blast fungus).